The following is a 133-amino-acid chain: ATP synthase epsilon chain, chloroplastic (133 aa).

This sequence belongs to the ATPase epsilon chain family. In terms of assembly, F-type ATPases have 2 components, CF(1) - the catalytic core - and CF(0) - the membrane proton channel. CF(1) has five subunits: alpha(3), beta(3), gamma(1), delta(1), epsilon(1). CF(0) has three main subunits: a, b and c.

Its subcellular location is the plastid. The protein localises to the chloroplast thylakoid membrane. In terms of biological role, produces ATP from ADP in the presence of a proton gradient across the membrane. This Cyanidium caldarium (Red alga) protein is ATP synthase epsilon chain, chloroplastic.